The sequence spans 55 residues: Photosystem II reaction center protein K (55 aa).

A propeptide spanning residues 1-18 (MFYIHLENTFDLSSTILV) is cleaved from the precursor. The helical transmembrane segment at 26 to 46 (IFDPIVDVMPIIPLFFFLLAF) threads the bilayer.

This sequence belongs to the PsbK family. PSII is composed of 1 copy each of membrane proteins PsbA, PsbB, PsbC, PsbD, PsbE, PsbF, PsbH, PsbI, PsbJ, PsbK, PsbL, PsbM, PsbT, PsbX, PsbY, PsbZ, Psb30/Ycf12, at least 3 peripheral proteins of the oxygen-evolving complex and a large number of cofactors. It forms dimeric complexes.

It is found in the plastid. It localises to the chloroplast thylakoid membrane. Functionally, one of the components of the core complex of photosystem II (PSII). PSII is a light-driven water:plastoquinone oxidoreductase that uses light energy to abstract electrons from H(2)O, generating O(2) and a proton gradient subsequently used for ATP formation. It consists of a core antenna complex that captures photons, and an electron transfer chain that converts photonic excitation into a charge separation. This Anthoceros angustus (Hornwort) protein is Photosystem II reaction center protein K.